The following is a 292-amino-acid chain: THO complex subunit 4B (292 aa).

Residues 1-50 form a disordered region; that stretch reads MSGGLDMSLDDIIKSNRKPTGSRGRGGIGGGNNTGGRGGSGSNSGPSRRF. S2 is subject to N-acetylserine. Gly residues predominate over residues 23–42; that stretch reads RGRGGIGGGNNTGGRGGSGS. The region spanning 108-185 is the RRM domain; the sequence is TKLYISNLDY…KLMKIEIVGT (78 aa). Gly residues predominate over residues 241–252; sequence GGGFGGGNFRGG. The interval 241–292 is disordered; it reads GGGFGGGNFRGGRGARGRGGRGSGGRGRDENVSAEDLDAELDKYHKEAMETS. Positions 280–292 are enriched in basic and acidic residues; it reads ELDKYHKEAMETS.

This sequence belongs to the ALYREF family. Interacts with RH15 and RH56.

It is found in the nucleus. Its subcellular location is the nucleoplasm. Export adapter involved in nuclear export of spliced and unspliced mRNA. This chain is THO complex subunit 4B (ALY2), found in Arabidopsis thaliana (Mouse-ear cress).